A 640-amino-acid chain; its full sequence is 1-deoxy-D-xylulose-5-phosphate synthase (640 aa).

Residues H75 and 117–119 each bind thiamine diphosphate; that span reads GHA. D146 contacts Mg(2+). Residues 147-148, N175, and E370 each bind thiamine diphosphate; that span reads AA. A Mg(2+)-binding site is contributed by N175.

It belongs to the transketolase family. DXPS subfamily. As to quaternary structure, homodimer. Mg(2+) serves as cofactor. It depends on thiamine diphosphate as a cofactor.

The catalysed reaction is D-glyceraldehyde 3-phosphate + pyruvate + H(+) = 1-deoxy-D-xylulose 5-phosphate + CO2. The protein operates within metabolic intermediate biosynthesis; 1-deoxy-D-xylulose 5-phosphate biosynthesis; 1-deoxy-D-xylulose 5-phosphate from D-glyceraldehyde 3-phosphate and pyruvate: step 1/1. Catalyzes the acyloin condensation reaction between C atoms 2 and 3 of pyruvate and glyceraldehyde 3-phosphate to yield 1-deoxy-D-xylulose-5-phosphate (DXP). This chain is 1-deoxy-D-xylulose-5-phosphate synthase, found in Chlamydia trachomatis serovar A (strain ATCC VR-571B / DSM 19440 / HAR-13).